The primary structure comprises 630 residues: ATP-dependent zinc metalloprotease FtsH (630 aa).

The Cytoplasmic portion of the chain corresponds to 1-7 (MNNFMKN). Residues 8–28 (IGFYLVLIALSILVAQFFVDT) traverse the membrane as a helical segment. Residues 29 to 111 (DVNTIVDTDV…KTEPEPTAPW (83 aa)) lie on the Periplasmic side of the membrane. Residues 112 to 132 (WTGMLAYILPIILLIGAWFFI) form a helical membrane-spanning segment. Residues 133 to 630 (MQRMQGGGSQ…ENREHENNDK (498 aa)) lie on the Cytoplasmic side of the membrane. Residue 203-210 (GPPGTGKT) coordinates ATP. His-425 is a binding site for Zn(2+). Glu-426 is a catalytic residue. Zn(2+) is bound by residues His-429 and Asp-501. Positions 601-630 (KLIKGEPLDDDSIDNSTDENENREHENNDK) are disordered. The span at 608 to 619 (LDDDSIDNSTDE) shows a compositional bias: acidic residues. The span at 620-630 (NENREHENNDK) shows a compositional bias: basic and acidic residues.

This sequence in the central section; belongs to the AAA ATPase family. It in the C-terminal section; belongs to the peptidase M41 family. As to quaternary structure, homohexamer. Requires Zn(2+) as cofactor.

It is found in the cell inner membrane. Acts as a processive, ATP-dependent zinc metallopeptidase for both cytoplasmic and membrane proteins. Plays a role in the quality control of integral membrane proteins. The sequence is that of ATP-dependent zinc metalloprotease FtsH from Halothermothrix orenii (strain H 168 / OCM 544 / DSM 9562).